The chain runs to 292 residues: Probable alpha-L-glutamate ligase (292 aa).

Residues 104-287 enclose the ATP-grasp domain; sequence HQLLAAKGID…VATRIIEHVE (184 aa). ATP contacts are provided by residues Lys-141, 178 to 179, Asp-187, and 211 to 213; these read EF and RSN. Mg(2+) contacts are provided by Asp-248, Glu-260, and Asn-262. Asp-248, Glu-260, and Asn-262 together coordinate Mn(2+).

This sequence belongs to the RimK family. It depends on Mg(2+) as a cofactor. Mn(2+) serves as cofactor.

The chain is Probable alpha-L-glutamate ligase from Stenotrophomonas maltophilia (strain R551-3).